The chain runs to 801 residues: Heavy metal tolerance factor 1 (801 aa).

At 1–24 (MGFSPFLDECRAEGLWPIGPSCNK) the chain is on the lumenal side. Residues 25-45 (IISFGVYTFFIVVNFIVLCIP) traverse the membrane as a helical segment. At 46–75 (NSNSANNNYRRMTDDDASSTSKLTISKILS) the chain is on the cytoplasmic side. Residues 76-96 (ICTIFAVICQSIFYFCFTFYF) traverse the membrane as a helical segment. The Lumenal portion of the chain corresponds to 97–101 (HPYTH). A helical transmembrane segment spans residues 102 to 122 (LLLAFCVSKLFFWILSLCSFS). Topologically, residues 123 to 129 (KWRNQPS) are cytoplasmic. The helical transmembrane segment at 130–150 (TPISLAFAFSAALLIHCIPLT) threads the bilayer. The Lumenal segment spans residues 151–167 (DWKKYFEPTSKNRGDLT). Residues 168–188 (FYIIELALVTVVFFFTIVTGL) traverse the membrane as a helical segment. Over 189-226 (FNFSGCSSRESAWNNLSKKVVTVAPYIWPTKSISLQLR) the chain is Cytoplasmic. Residues 227 to 247 (VVFCLFLLIIGRLINVSLPIL) form a helical membrane-spanning segment. The ABC transmembrane type-1 domain maps to 227–516 (VVFCLFLLII…FGTIYRVIQK (290 aa)). Residues 248-264 (SKWIVDELATPDTFQYS) lie on the Lumenal side of the membrane. The helical transmembrane segment at 265–285 (LLFLATFLKFLQGNGAMGGFL) threads the bilayer. Residues 286-341 (NTVRTYLWIPIQQYTTRELEVELFKHLHSLSLRWHLSRKTGQVLRVMDRGTSSVNN) are Cytoplasmic-facing. A helical transmembrane segment spans residues 342 to 364 (ILNYILFNVVPTIADIVIAVIFF). The Lumenal segment spans residues 365 to 371 (FSAFNAY). A helical transmembrane segment spans residues 372–390 (FGLIVFGTMALYLTVTISI). The Cytoplasmic segment spans residues 391–461 (TEWRTQYIRE…SLAFLNCLQN (71 aa)). A helical transmembrane segment spans residues 462–482 (AIIGIGMIGGSVFVVYMIVHE). Residues 483–489 (KTLTVGD) are Lumenal-facing. A helical membrane pass occupies residues 490 to 510 (YVLFTTYLLQLYTPLNFFGTI). Over 511–801 (YRVIQKAFVD…KSIELGEELP (291 aa)) the chain is Cytoplasmic. Residues 550–784 (ISVKNLTFEY…QGTYASMWEA (235 aa)) form the ABC transporter domain. ATP is bound at residue 583–590 (GSSGSGKS).

It belongs to the ABC transporter superfamily. ABCB family. Heavy Metal importer (TC 3.A.1.210) subfamily. In terms of tissue distribution, expressed in coelomocytes, as well as in head and tail neurons, and in the intestinal cells.

Its subcellular location is the vacuole membrane. It localises to the early endosome. The protein localises to the late endosome. The protein resides in the recycling endosome. May play a pivotal role in the detoxification of heavy metals such as cadmium but do not depend exclusively on phytochelatins (PC) synthesis. The sequence is that of Heavy metal tolerance factor 1 from Caenorhabditis elegans.